The primary structure comprises 298 residues: Protoheme IX farnesyltransferase (298 aa).

9 helical membrane-spanning segments follow: residues Val28–Val48, Leu50–Ile70, Leu95–Ala117, Pro121–Tyr138, Asn149–Thr169, Ala176–Val196, Cys222–Met242, Thr243–Trp263, and Ala274–Val294.

It belongs to the UbiA prenyltransferase family. Protoheme IX farnesyltransferase subfamily.

The protein resides in the cell inner membrane. The enzyme catalyses heme b + (2E,6E)-farnesyl diphosphate + H2O = Fe(II)-heme o + diphosphate. It participates in porphyrin-containing compound metabolism; heme O biosynthesis; heme O from protoheme: step 1/1. In terms of biological role, converts heme B (protoheme IX) to heme O by substitution of the vinyl group on carbon 2 of heme B porphyrin ring with a hydroxyethyl farnesyl side group. This chain is Protoheme IX farnesyltransferase, found in Idiomarina loihiensis (strain ATCC BAA-735 / DSM 15497 / L2-TR).